A 476-amino-acid polypeptide reads, in one-letter code: NAC domain-containing protein 86 (476 aa).

Residues 6–157 (LPPGFRFHPT…AYALCRVFKK (152 aa)) enclose the NAC domain. A DNA-binding region spans residues 105 to 163 (IGTKKTLVYYRGRAPHGIRTGWVMHEYRLDESECEPSAFGMQDAYALCRVFKKIVIEAK).

As to expression, expressed in a few sieve element cells before enucleation and in phloem-pole pericycle cells.

The protein resides in the nucleus. In terms of biological role, transcription factor directing sieve element enucleation and cytosol degradation. Not required for formation of lytic vacuoles. Regulates, with NAC045, the transcription of NEN1, NEN2, NEN3, NEN4, RTM1, RTM2, UBP16, PLDZETA, ABCB10 and At1g26450. This chain is NAC domain-containing protein 86, found in Arabidopsis thaliana (Mouse-ear cress).